The sequence spans 236 residues: 2-C-methyl-D-erythritol 4-phosphate cytidylyltransferase (236 aa).

This sequence belongs to the IspD/TarI cytidylyltransferase family. IspD subfamily. Homodimer.

It carries out the reaction 2-C-methyl-D-erythritol 4-phosphate + CTP + H(+) = 4-CDP-2-C-methyl-D-erythritol + diphosphate. Its pathway is isoprenoid biosynthesis; isopentenyl diphosphate biosynthesis via DXP pathway; isopentenyl diphosphate from 1-deoxy-D-xylulose 5-phosphate: step 2/6. Catalyzes the formation of 4-diphosphocytidyl-2-C-methyl-D-erythritol from CTP and 2-C-methyl-D-erythritol 4-phosphate (MEP). This Escherichia coli O7:K1 (strain IAI39 / ExPEC) protein is 2-C-methyl-D-erythritol 4-phosphate cytidylyltransferase.